The primary structure comprises 236 residues: Small ribosomal subunit protein uS2c (236 aa).

The protein belongs to the universal ribosomal protein uS2 family.

It is found in the plastid. Its subcellular location is the chloroplast. In Panax ginseng (Korean ginseng), this protein is Small ribosomal subunit protein uS2c (rps2).